Consider the following 691-residue polypeptide: Protein 4.2 (691 aa).

Gly-2 carries the N-myristoyl glycine lipid modification. The interval 31–39 is band 3 binding; sequence LFVRRGQPF. Ser-248 carries the phosphoserine; by PKA modification.

Belongs to the transglutaminase superfamily. Transglutaminase family. In terms of assembly, component of the ankyrin-1 complex in the erythrocyte, composed of ANK1, RHCE, RHAG, SLC4A1, EPB42, GYPA, GYPB and AQP1. Interacts with SLC4A1 (via the cytoplasmic domain); this interaction is mediated by the SLC4A1 Band 3-I dimer. Interacts with ANK1 (via ANK 1-13 repeats). Interacts with AQP1 (via the C-terminal). In terms of processing, both cAMP-dependent kinase (CAPK) and another kinase present in the red-blood cells seem to be able to phosphorylate EPB42.

The protein localises to the cell membrane. Its subcellular location is the cytoplasm. It localises to the cytoskeleton. Its function is as follows. Component of the ankyrin-1 complex, a multiprotein complex involved in the stability and shape of the erythrocyte membrane. This Homo sapiens (Human) protein is Protein 4.2.